Consider the following 253-residue polypeptide: Retinoic acid early-inducible protein 1-beta (253 aa).

An N-terminal signal peptide occupies residues 1–28 (MAKAAVTKRHHFMIQKLLILLSYGYTNG). Cysteine 37 and cysteine 56 are oxidised to a cystine. 5 N-linked (GlcNAc...) asparagine glycosylation sites follow: asparagine 38, asparagine 70, asparagine 83, asparagine 143, and asparagine 156. The cysteines at positions 90 and 190 are disulfide-linked. The segment at 198–230 (LKQSKEKPRSTSRSPSITQLTSTSPLPPPSHST) is disordered. The span at 211–221 (SPSITQLTSTS) shows a compositional bias: low complexity. Serine 229 carries the GPI-anchor amidated serine lipid modification. The propeptide at 230 to 253 (TSKKGFISVGLIFISLLFAFAFAM) is removed in mature form.

It belongs to the NKG2D ligand family. Post-translationally, glycosylated. As to expression, expressed predominantly in embryonic brain.

The protein localises to the cell membrane. Functionally, acts as a ligand for KLRK1. This chain is Retinoic acid early-inducible protein 1-beta (Raet1b), found in Mus musculus (Mouse).